The primary structure comprises 399 residues: Keratin, type I cytoskeletal 19 (399 aa).

The interval methionine 1–asparagine 78 is head. Arginine 7 bears the Omega-N-methylarginine mark. A phosphoserine mark is found at serine 14 and serine 22. Arginine 24 is modified (asymmetric dimethylarginine; alternate). Position 24 is an omega-N-methylarginine; alternate (arginine 24). Arginine 32 bears the Omega-N-methylarginine mark. Serine 35 and serine 40 each carry phosphoserine. An omega-N-methylarginine mark is found at arginine 43 and arginine 51. Phosphoserine is present on residues serine 57 and serine 71. The tract at residues glutamate 79 to tryptophan 114 is coil 1A. The 312-residue stretch at glutamate 79–phenylalanine 390 folds into the IF rod domain. Positions tyrosine 115 to threonine 132 are linker 1. The interval isoleucine 133–leucine 224 is coil 1B. The segment at lysine 225–isoleucine 247 is linker 12. The tract at residues aspartate 243–tyrosine 389 is necessary for interaction with PNN. Positions leucine 248–glutamine 386 are coil 2. The residue at position 322 (threonine 322) is a Phosphothreonine. The rod-like helical tail stretch occupies residues aspartate 387 to leucine 399. Position 394 is a phosphoserine (serine 394).

The protein belongs to the intermediate filament family. As to quaternary structure, heterotetramer of two type I and two type II keratins. Interacts with PNN and the actin-binding domain of DMD.

Its function is as follows. Involved in the organization of myofibers. Together with KRT8, helps to link the contractile apparatus to dystrophin at the costameres of striated muscle. This chain is Keratin, type I cytoskeletal 19 (KRT19), found in Bos taurus (Bovine).